The primary structure comprises 211 residues: PITH domain-containing protein GA19395 (211 aa).

The 173-residue stretch at 20 to 192 (DHALEMGIEY…GVTICNYEAR (173 aa)) folds into the PITH domain.

This sequence belongs to the PITHD1 family.

This Drosophila pseudoobscura pseudoobscura (Fruit fly) protein is PITH domain-containing protein GA19395.